Here is a 139-residue protein sequence, read N- to C-terminus: uncharacterized protein (139 aa).

A helical transmembrane segment spans residues serine 22 to isoleucine 38.

Its subcellular location is the membrane. This is an uncharacterized protein from Saccharomyces cerevisiae (strain ATCC 204508 / S288c) (Baker's yeast).